The sequence spans 454 residues: GA-binding protein alpha chain (454 aa).

The region spanning 168 to 251 is the PNT domain; the sequence is AALEGYRKEQ…SHLELLRKYV (84 aa). The segment at 295–316 is disordered; it reads KVQRSPRISGEDRSSPGNRTGN. The residue at position 303 (Ser303) is a Phosphoserine. A DNA-binding region (ETS) is located at residues 320–400; it reads IQLWQFLLEL…QGKRFVYKFV (81 aa).

Belongs to the ETS family. In terms of assembly, heterotetramer of two alpha and two beta subunits. As to expression, ubiquitous.

It is found in the nucleus. Its function is as follows. Transcription factor capable of interacting with purine rich repeats (GA repeats). Positively regulates transcription of transcriptional repressor Rhit/Zpf13. The chain is GA-binding protein alpha chain (Gabpa) from Mus musculus (Mouse).